The primary structure comprises 367 residues: 2-aminoethylphosphonate--pyruvate transaminase (367 aa).

An N6-(pyridoxal phosphate)lysine modification is found at Lys193.

The protein belongs to the class-V pyridoxal-phosphate-dependent aminotransferase family. PhnW subfamily. In terms of assembly, homodimer. Pyridoxal 5'-phosphate serves as cofactor.

It catalyses the reaction (2-aminoethyl)phosphonate + pyruvate = phosphonoacetaldehyde + L-alanine. Involved in phosphonate degradation. The polypeptide is 2-aminoethylphosphonate--pyruvate transaminase (Vibrio parahaemolyticus serotype O3:K6 (strain RIMD 2210633)).